The following is a 412-amino-acid chain: uncharacterized protein (412 aa).

The Radical SAM core domain maps to 50–264 (EVDIRTAYIN…KSGRRIVIGD (215 aa)). Residues Cys-64, Cys-68, and Cys-71 each coordinate [4Fe-4S] cluster.

The protein belongs to the radical SAM superfamily. Anaerobic sulfatase-maturating enzyme family. Requires [4Fe-4S] cluster as cofactor.

This is an uncharacterized protein from Archaeoglobus fulgidus (strain ATCC 49558 / DSM 4304 / JCM 9628 / NBRC 100126 / VC-16).